Here is a 1802-residue protein sequence, read N- to C-terminus: Non-reducing polyketide synthase nscA (1802 aa).

Residues 27-261 (DLFRRLDQHS…PLPVYDGLCH (235 aa)) form an N-terminal acylcarrier protein transacylase domain (SAT) region. A Ketosynthase family 3 (KS3) domain is found at 396 to 829 (SSKLAIVGMA…GGNTTLLLED (434 aa)). Active-site for beta-ketoacyl synthase activity residues include C569, H704, and H747. Residues 935–1235 (FTGQGAYYHG…SASAIPSCRR (301 aa)) form a malonyl-CoA:ACP transacylase (MAT) domain region. The interval 1322–1641 (TSLVHQITAE…RLLMDRFFSP (320 aa)) is product template (PT) domain. An N-terminal hotdog fold region spans residues 1326 to 1462 (HQITAETVEA…ATIRFEDPEA (137 aa)). Positions 1326–1636 (HQITAETVEA…FRRVPRLLMD (311 aa)) constitute a PKS/mFAS DH domain. H1358 functions as the Proton acceptor; for dehydratase activity in the catalytic mechanism. A C-terminal hotdog fold region spans residues 1490–1636 (ASRLSKPLAY…FRRVPRLLMD (147 aa)). Catalysis depends on D1547, which acts as the Proton donor; for dehydratase activity. Positions 1699 to 1729 (LLATSSKSSTPKESPIVTPAESERAEPVDNS) are disordered. Over residues 1702 to 1713 (TSSKSSTPKESP) the composition is skewed to low complexity. The Carrier domain occupies 1725-1802 (PVDNSMTSQC…EMTAWIEEYC (78 aa)). S1762 is modified (O-(pantetheine 4'-phosphoryl)serine).

Pantetheine 4'-phosphate serves as cofactor.

Its pathway is secondary metabolite biosynthesis. Non-reducing polyketide synthase; part of the gene cluster that mediates the biosynthesis of neosartoricin B, a prenylated anthracenone that probably exhibits T-cell antiproliferative activity, suggestive of a physiological role as an immunosuppressive agent. The non-reducing polyketide synthase nscA probably synthesizes and cyclizes the decaketide backbone. The hydrolase nscB then mediates the product release through hydrolysis followed by spontaneous decarboxylation. The prenyltransferase nscD catalyzes the addition of the dimethylallyl group to the aromatic C5. The FAD-dependent monooxygenase nscC is then responsible for the stereospecific hydroxylation at C2. Neosartoricin B can be converted into two additional compounds neosartoricins C and D. Neosartoricin C is a spirocyclic compound that is cyclized through the attack of C3 hydroxyl on C14, followed by dehydration. On the other hand, neosartoricin D is a further cyclized compound in which attack of C2 on C14 in neosartoricin C results in the formation of the acetal-containing dioxabicyclo-octanone ring. Both of these compounds are novel and possibly represent related metabolites of the gene cluster. The chain is Non-reducing polyketide synthase nscA from Trichophyton tonsurans (strain CBS 112818) (Scalp ringworm fungus).